Reading from the N-terminus, the 430-residue chain is Adenylosuccinate synthetase (430 aa).

GTP contacts are provided by residues 13-19 (GDEGKGK) and 41-43 (GHT). Asp-14 functions as the Proton acceptor in the catalytic mechanism. Mg(2+) is bound by residues Asp-14 and Gly-41. Residues 14–17 (DEGK), 39–42 (NAGH), Thr-130, Arg-144, Gln-225, Thr-240, and Arg-304 contribute to the IMP site. His-42 acts as the Proton donor in catalysis. 300–306 (STTGRAR) lines the substrate pocket. GTP is bound by residues Arg-306, 332-334 (KLD), and 414-416 (STG).

This sequence belongs to the adenylosuccinate synthetase family. Homodimer. Mg(2+) is required as a cofactor.

It is found in the cytoplasm. The enzyme catalyses IMP + L-aspartate + GTP = N(6)-(1,2-dicarboxyethyl)-AMP + GDP + phosphate + 2 H(+). It participates in purine metabolism; AMP biosynthesis via de novo pathway; AMP from IMP: step 1/2. Functionally, plays an important role in the de novo pathway of purine nucleotide biosynthesis. Catalyzes the first committed step in the biosynthesis of AMP from IMP. This chain is Adenylosuccinate synthetase, found in Thioalkalivibrio sulfidiphilus (strain HL-EbGR7).